The chain runs to 294 residues: Putative cuticle collagen 145 (294 aa).

Residues 1 to 30 form the signal peptide; sequence MEKILVTFSTGAASIAVLAVLFTVPSLYNT. Over residues 100–112 the composition is skewed to pro residues; that stretch reads TCPPGPPGPPGQP. 2 disordered regions span residues 100–133 and 148–276; these read TCPP…ATFA and PQGP…LPGN. Triple-helical region regions lie at residues 102–127 and 148–277; these read PPGP…KGDD and PQGP…PGND. Composition is skewed to low complexity over residues 164 to 194 and 219 to 265; these read AGPD…NGQP and APGA…DGQP. Positions 218–276 constitute a Collagen-like domain; that stretch reads GAPGAPGNAGPAGPAGQDGFPGQDGAPGPAGPAGQDGFPGNAGSDGQPGAPGGPGLPGN.

The protein belongs to the cuticular collagen family. In terms of assembly, collagen polypeptide chains are complexed within the cuticle by disulfide bonds and other types of covalent cross-links.

Functionally, nematode cuticles are composed largely of collagen-like proteins. The cuticle functions both as an exoskeleton and as a barrier to protect the worm from its environment. This chain is Putative cuticle collagen 145 (col-145), found in Caenorhabditis elegans.